The sequence spans 159 residues: Succinate dehydrogenase [ubiquinone] cytochrome b small subunit, mitochondrial (159 aa).

The N-terminal 56 residues, 1–56 (MAVLLKLGVLCSGQGARALLLRSRVVRPAYVSAFLQDQPTQGRCGTQHIHLSPSHH), are a transit peptide targeting the mitochondrion. At 57–63 (SGSKAAS) the chain is on the mitochondrial matrix side. The helical transmembrane segment at 64–85 (LHWTSERVVSVLLLGLIPAGYL) threads the bilayer. At 86–90 (NPCSV) the chain is on the mitochondrial intermembrane side. A helical membrane pass occupies residues 91–111 (VDYSLAAALTLHSHWGLGQVV). H102 contributes to the heme b binding site. Residues 112-120 (TDYVHGDTL) lie on the Mitochondrial matrix side of the membrane. Residue Y114 participates in a ubiquinone binding. A helical transmembrane segment spans residues 121–142 (PKAARAGLLALSALTFAGLCYF). At 143–159 (NYHDVGICRAVAMLWKL) the chain is on the mitochondrial intermembrane side.

It belongs to the CybS family. As to quaternary structure, component of complex II composed of four subunits: the flavoprotein (FP) SDHA, iron-sulfur protein (IP) SDHB, and a cytochrome b560 composed of SDHC and SDHD.

The protein localises to the mitochondrion inner membrane. Its pathway is carbohydrate metabolism; tricarboxylic acid cycle. In terms of biological role, membrane-anchoring subunit of succinate dehydrogenase (SDH) that is involved in complex II of the mitochondrial electron transport chain and is responsible for transferring electrons from succinate to ubiquinone (coenzyme Q). SDH also oxidizes malate to the non-canonical enol form of oxaloacetate, enol-oxaloacetate. Enol-oxaloacetate, which is a potent inhibitor of the succinate dehydrogenase activity, is further isomerized into keto-oxaloacetate. This is Succinate dehydrogenase [ubiquinone] cytochrome b small subunit, mitochondrial (Sdhd) from Mus musculus (Mouse).